The primary structure comprises 362 residues: Lipoprotein p35 (362 aa).

An N-terminal signal peptide occupies residues 1–30 (MKIKKIKLLKALALTGAFGIVATVPVIVSS). The N-palmitoyl cysteine moiety is linked to residue C31. C31 is lipidated: S-diacylglycerol cysteine. Positions 33 to 53 (STSENNGNGNGNGGTDGNTQQ) are disordered.

It belongs to the p35 lipoprotein family. The N-terminus is blocked.

The protein localises to the cell membrane. Functionally, major M.penetrans antigen. This Malacoplasma penetrans (strain HF-2) (Mycoplasma penetrans) protein is Lipoprotein p35.